The sequence spans 38 residues: Esterase-5 (38 aa).

The tract at residues 1-38 (SAAADPLIVELPNGKVRGRDNEGYYEAEGIPRAEPPVG) is disordered.

Belongs to the type-B carboxylesterase/lipase family.

The enzyme catalyses a carboxylic ester + H2O = an alcohol + a carboxylate + H(+). This chain is Esterase-5 (Est-5), found in Drosophila mojavensis (Fruit fly).